Here is a 472-residue protein sequence, read N- to C-terminus: Ribosomal protein uS12 methylthiotransferase RimO (472 aa).

An MTTase N-terminal domain is found at Asn-33–Pro-143. [4Fe-4S] cluster is bound by residues Cys-42, Cys-78, Cys-107, Cys-175, Cys-179, and Cys-182. A Radical SAM core domain is found at Leu-161–Glu-398. Residues Ala-401 to Asp-467 form the TRAM domain.

It belongs to the methylthiotransferase family. RimO subfamily. Requires [4Fe-4S] cluster as cofactor.

The protein localises to the cytoplasm. It catalyses the reaction L-aspartate(89)-[ribosomal protein uS12]-hydrogen + (sulfur carrier)-SH + AH2 + 2 S-adenosyl-L-methionine = 3-methylsulfanyl-L-aspartate(89)-[ribosomal protein uS12]-hydrogen + (sulfur carrier)-H + 5'-deoxyadenosine + L-methionine + A + S-adenosyl-L-homocysteine + 2 H(+). In terms of biological role, catalyzes the methylthiolation of an aspartic acid residue of ribosomal protein uS12. In Shewanella baltica (strain OS195), this protein is Ribosomal protein uS12 methylthiotransferase RimO.